Reading from the N-terminus, the 271-residue chain is Putative pyrimidine-specific ribonucleoside hydrolase RihB (271 aa).

Substrate-binding residues include Q185 and H197.

It belongs to the IUNH family. RihB subfamily.

The catalysed reaction is a pyrimidine ribonucleoside + H2O = a pyrimidine nucleobase + D-ribose. The polypeptide is Putative pyrimidine-specific ribonucleoside hydrolase RihB (rihB) (Shigella dysenteriae serotype 1 (strain Sd197)).